Consider the following 65-residue polypeptide: Conotoxin mr5.1b (65 aa).

The N-terminal stretch at 1-19 (MRCVPVFVILLLLIASAPS) is a signal peptide. Residues 20–48 (VDARLKTKDDMPLPSSHANIKRTLQMLRN) constitute a propeptide that is removed on maturation. Glutamate 60 is modified (4-carboxyglutamate).

It belongs to the conotoxin T superfamily. Contains 2 disulfide bonds that can be either 'C1-C3, C2-C4' or 'C1-C4, C2-C3', since these disulfide connectivities have been observed for conotoxins with cysteine framework V (for examples, see AC P0DQQ7 and AC P81755). As to expression, expressed by the venom duct.

It is found in the secreted. The sequence is that of Conotoxin mr5.1b from Conus marmoreus (Marble cone).